We begin with the raw amino-acid sequence, 711 residues long: Taperin (711 aa).

Disordered regions lie at residues 134–305, 328–384, and 414–438; these read SRLL…APKP, RNSF…LGKS, and QRPSSPPPFLPAASEEAEPAEGLRV. Pro residues predominate over residues 157–180; it reads PPPPPPPPAPPRPPPAAPSPPAAP. Residues 197-206 show a composition bias toward polar residues; that stretch reads LQKTGSNSFT. Position 241 is a phosphoserine (Ser-241). Low complexity predominate over residues 267–282; it reads TPSATPASPPASATPS. Polar residues predominate over residues 283 to 296; the sequence is QRQCVSAATSTNDS. Ser-362, Ser-418, and Ser-463 each carry phosphoserine. Disordered stretches follow at residues 500–535, 572–630, 642–662, and 674–711; these read TFTVVPKRKPGTLQDQHFSQANREPRPREAEEEEAS, SRKK…EKPF, SVRPESSRLPEGSSGLSSYTP, and QALEQAPREAEPPPVEAMLTPASQNDLSDFRSEPALYF. 2 stretches are compositionally biased toward polar residues: residues 512-521 and 581-590; these read LQDQHFSQAN and NDKSLQTTFE. Residues 597–624 are compositionally biased toward acidic residues; sequence LEQEEEVDQQEEEEEEEEEEEEEEEGSG.

This sequence belongs to the taperin family. Interacts with GRXCR2; the interaction restricts TPRN to the stereocilum basal region. Interacts with actin ACTB; the interaction may stabilize stereocilia. Interacts with CLIC5. Interacts with PTPRQ. TPRN, CLIC5 and PTPQR form concentric rings at the base of stereocilia and may form a complex. Interacts with phosphatase PPP1CA; the interaction results in inhibition of PPC1A phosphatase activity. Interacts with DNA damage response proteins XRCC6/KU70, XRCC5/KU80, PARP1, TOP1 and TOP2A; these interactions recruit TPRN to sites of DNA damage where it may play a role in DNA repair. As to expression, expression is detected in fetal cochlea.

Its subcellular location is the cell projection. The protein localises to the stereocilium. The protein resides in the microvillus. It is found in the nucleus. It localises to the nucleoplasm. Its subcellular location is the cytoplasm. Essential for hearing. Required for maintenance of stereocilia on both inner and outer hair cells. Necessary for the integrity of the stereociliary rootlet. May act as an actin cytoskeleton regulator involved in the regulation of actin dynamics at the pointed end in hair cells. Forms rings at the base of stereocilia and binds actin filaments in the stereocilia which may stabilize the stereocilia. Acts as a strong inhibitor of PPP1CA phosphatase activity. Recruited to sites of DNA damage and may play a role in DNA damage repair. This Homo sapiens (Human) protein is Taperin (TPRN).